The following is a 153-amino-acid chain: H/ACA ribonucleoprotein complex subunit 2 (153 aa).

A Glycyl lysine isopeptide (Lys-Gly) (interchain with G-Cter in SUMO2) cross-link involves residue lysine 3. Lysine 5 participates in a covalent cross-link: Glycyl lysine isopeptide (Lys-Gly) (interchain with G-Cter in SUMO); alternate. Residue lysine 5 forms a Glycyl lysine isopeptide (Lys-Gly) (interchain with G-Cter in SUMO1); alternate linkage. Residue lysine 5 forms a Glycyl lysine isopeptide (Lys-Gly) (interchain with G-Cter in SUMO2); alternate linkage.

It belongs to the eukaryotic ribosomal protein eL8 family. In terms of assembly, part of the H/ACA small nucleolar ribonucleoprotein (H/ACA snoRNP) complex, which contains NHP2/NOLA2, GAR1/NOLA1, NOP10/NOLA3, and DKC1/NOLA4, which is presumed to be the catalytic subunit. The complex contains a stable core formed by binding of one or two NOP10-DKC1 heterodimers to NHP2; GAR1 subsequently binds to this core via DKC1. The complex binds a box H/ACA small nucleolar RNA (snoRNA), which may target the specific site of modification within the RNA substrate. During assembly, the complex contains NAF1 instead of GAR1/NOLA1. The complex also interacts with TERC, which contains a 3'-terminal domain related to the box H/ACA snoRNAs. Specific interactions with snoRNAs or TERC are mediated by GAR1 and NHP2. Associates with NOLC1/NOPP140. H/ACA snoRNPs interact with the SMN complex, consisting of SMN1 or SMN2, GEMIN2/SIP1, DDX20/GEMIN3, and GEMIN4. This is mediated by interaction between GAR1 and SMN1 or SMN2. The SMN complex may be required for correct assembly of the H/ACA snoRNP complex. Component of the telomerase holoenzyme complex composed of one molecule of TERT, one molecule of WRAP53/TCAB1, two molecules of H/ACA ribonucleoprotein complex subunits DKC1, NOP10, NHP2 and GAR1, and a telomerase RNA template component (TERC). The telomerase holoenzyme complex is associated with TEP1, SMG6/EST1A and POT1.

The protein resides in the nucleus. It is found in the nucleolus. Its subcellular location is the cajal body. In terms of biological role, required for ribosome biogenesis and telomere maintenance. Part of the H/ACA small nucleolar ribonucleoprotein (H/ACA snoRNP) complex, which catalyzes pseudouridylation of rRNA. This involves the isomerization of uridine such that the ribose is subsequently attached to C5, instead of the normal N1. Each rRNA can contain up to 100 pseudouridine ('psi') residues, which may serve to stabilize the conformation of rRNAs. May also be required for correct processing or intranuclear trafficking of TERC, the RNA component of the telomerase reverse transcriptase (TERT) holoenzyme. The polypeptide is H/ACA ribonucleoprotein complex subunit 2 (NHP2) (Bos taurus (Bovine)).